The primary structure comprises 1756 residues: MMSIAQVRSAGSAGNYYTDKDNYYVLGSMGERWAGRGAEQLGLQGSVDKDVFTRLLEGRLPDGADLSRMQDGSNRHRPGYDLTFSAPKSVSMMAMLGGDKRLIDAHNQAVDFAVRQVEALASTRVMTDGQSETVLTGNLVMALFNHDTSRDQEPQLHTHAVVANVTQHNGEWKTLSSDKVGKTGFIENVYANQIAFGRLYREKLKEQVEALGYETEVVGKHGMWEMPGVPVEAFSGRSQTIREAVGEDASLKSRDVAALDTRKSKQHVDPEIKMAEWMQTLKETGFDIRAYRDAADQRADLRTLTPGPASQDGPDVQQAVTQAIAGLSERKVQFTYTDVLARTVGILPPENGVIERARAGIDEAISREQLIPLDREKGLFTSGIHVLDELSVRALSRDIMKQNRVTVHPEKSVPRTAGYSDAVSVLAQDRPSLAIVSGQGGAAGQRERVAELVMMAREQGREVQIIAADRRSQMNMKQDERLSGELITGRRQLLEGMAFTPGSTVIVDQGEKLSLKETLTLLDGAARHNVQVLITDSGQRTGTGSALMAMKDAGVNTYRWQGGEQRPATIISEPDRNVRYARLAGDFAASVKAGEESVAQVSGVREQAILTQAIRSELKTQGVLGLPEVTMTALSPVWLDSRSRYLRDMYRPGMVMEQWNPETRSHDRYVIDRVTAQSHSLTLRDAQGETQVVRISSLDSSWSLFRPEKMPVADGERLRVTGKIPGLRVSGGDRLQVASVSEDAMTVVVPGRAEPATLPVSDSPFTALKLENGWVETPGHSVSDSATVFASVTQMAMDNATLNGLARSGRDVRLYSSLDETRTAEKLARHPSFTVVSEQIKTRAGETSLETAISHQKSALHTPAQQAIHLALPVVESKKLAFSMVDLLTEAKSFAAEGTGFTELGGEINAQIKRGDLLYVDVAKGYGTGLLVSRASYEAEKSILRHILEGKEAVMPLMERVPGELMEKLTSGQRAATRMILETSDRFTVVQGYAGVGKTTQFRAVMSAVNMLPESERPRVVGLGPTHRAVGEMRSAGVDAQTLASFLHDTQLQQRSGETPDFSNTLFLLDESSMVGNTDMARAYALIAAGGGRAVASGDTDQLQAIAPGQPFRLQQTRSAADVAIMKEIVRQTPELREAVYSLINRDVERALSGLESVKPSQVPRQEGAWAPEHSVTEFSHSQEAKLAEAQQKAMLKGEAFPDVPMTLYEAIVRDYTGRTPEAREQTLIVTHLNEDRRVLNSMIHDVREKAGELGKEQVMVPVLNTANIRDGELRRLSTWETHRDALVLVDNVYHRIAGISKDDGLITLQDAEGNTRLISPREAVAEGVTLYTPDTIRVGTGDRMRFTKSDRERGYVANSVWTVTAVSGDSVTLSDGQQTREIRPGQEQAEQHIDLAYAITAHGAQGASETFAIALEGTEGNRKLMAGFESAYVALSRMKQHVQVYTDNRQGWTDAINNAVQKGTAHDVFEPKPDREVMNAERLFSTARELRDVAAGRAVLRQAGLAGGDSPARFIAPGRKYPQPYVALPAFDRNGKSAGIWLNPLTTDDGNGLRGFSGEGRVKGSGDAQFVALQGSRNGESLLADNMQDGVRIARDNPDSGVVVRIAGEGRPWNPGAITGGRVWGDIPDNSVQPGAGNGEPVTAEVLAQRQAEEAIRRETERRADEIVRKMAENKPDLPDGKTEQAVREIAGQERDRAAITEREAALPEGVLREPQRVREAVREIARENLLQERLQQMERDMVRDLQKEKTLGGD.

Residues 1–330 form a DNA relaxase region; sequence MMSIAQVRSA…TQAIAGLSER (330 aa). Y16 acts as the O-(5'-phospho-DNA)-tyrosine intermediate; for relaxase activity in catalysis. Y17 functions as the Relaxase in the catalytic mechanism. The Mg(2+) site is built by H146, H157, and H159. The DNA helicase I stretch occupies residues 950-1500; sequence GKEAVMPLME…LRDVAAGRAV (551 aa). 992-999 contributes to the ATP binding site; the sequence is GYAGVGKT. A required for DNA transfer, may interact with TraM region spans residues 1534–1756; that stretch reads RNGKSAGIWL…LQKEKTLGGD (223 aa). Residues 1717–1753 adopt a coiled-coil conformation; that stretch reads QRVREAVREIARENLLQERLQQMERDMVRDLQKEKTL.

It to TraI of plasmid IncFII R100. As to quaternary structure, monomer. Part of the relaxosome, a complex composed of plasmid-encodes TraI, TraM, TraY and host-encoded IHF bound to the F plasmid origin of transfer (oriT). Directly contacts coupling protein TraD. Seems to directly contact TraM via its C-terminus. It depends on Mg(2+) as a cofactor.

The protein resides in the cytoplasm. It catalyses the reaction ATP-independent breakage of single-stranded DNA, followed by passage and rejoining.. The enzyme catalyses ATP + H2O = ADP + phosphate + H(+). Nicking activity (relaxase) is inhibited by bisphosphonates such as the non-competitive inhibitor imidobisphosphate (PNP), etidronic acid (ETIDRO) and clodronic acid (CLODRO). The latter 2 are competitive inhibitors, and are already used clinically to treat bone loss (marketed as Didronel and Bonefos). All 3 compounds also inhibit conjugation and kill F plasmid-containing cells. They are specific to dual tyrosine relaxases such as those found in F and related R conjugative plasmids. Conjugative DNA transfer (CDT) is the unidirectional transfer of ssDNA plasmid from a donor to a recipient cell. It is the central mechanism by which antibiotic resistance and virulence factors are propagated in bacterial populations. Part of the relaxosome, which facilitates a site- and strand-specific cut in the origin of transfer by TraI, at the nic site. Relaxosome formation requires binding of IHF and TraY to the oriT region, which then facilitates binding of TraI relaxase. TraI forms a covalent 5'-phosphotyrosine intermediate linkage to the ssDNA. The transesterified T-strand moves from the donor cell to the recipient cell in a 5'to 3' direction, with the DNA helicase activity of TraI unwinding the DNA. DNA transfer occurs via the conjugative pore (transferosome) an intercellular junction mediated by a type IV secretion system, with TraD providing the means to link the relaxosome to the conjugative pore. The relaxase completes DNA transfer by reversing the covalent phosphotyrosine linkage and releasing the T-strand. In terms of biological role, traI has also been identified as DNA helicase I. DNA. helicase I is a potent, highly processive DNA-dependent ATPase, able to unwind about 1.1 kb dsDNA per second in a 5' to 3' manner. This chain is Multifunctional conjugation protein TraI (traI), found in Escherichia coli (strain K12).